Consider the following 98-residue polypeptide: Flagellar hook-basal body complex protein FliE (98 aa).

Low complexity predominate over residues 1–23 (MNNINDLRLNNNISNTNKSQNST). The tract at residues 1–24 (MNNINDLRLNNNISNTNKSQNSTG) is disordered.

The protein belongs to the FliE family.

It localises to the bacterial flagellum basal body. The sequence is that of Flagellar hook-basal body complex protein FliE from Campylobacter jejuni subsp. jejuni serotype O:2 (strain ATCC 700819 / NCTC 11168).